The following is an 806-amino-acid chain: Ankyrin repeat, bromo and BTB domain-containing protein DDB_G0293800 (806 aa).

ANK repeat units lie at residues 1 to 30, 34 to 63, 67 to 96, 100 to 130, and 134 to 163; these read MSNK…DVNQ, SNRY…LVNC, RGAT…DVNC, AGST…DVNL, and EGST…RADV. Residues 210–228 show a composition bias toward basic and acidic residues; it reads GVGKKEDDDNNMKIDKQES. The tract at residues 210–231 is disordered; that stretch reads GVGKKEDDDNNMKIDKQESEQQ. The BTB domain maps to 239–307; that stretch reads SDITFLIENQ…IYTGSIEKFE (69 aa). 2 disordered regions span residues 423–517 and 621–743; these read TRTA…SDSM and QNFP…EERR. Low complexity-rich tracts occupy residues 426 to 436 and 443 to 511; these read ANANASNSNQS and TSTT…SSSS. The Bromo domain occupies 516 to 622; that stretch reads SMNEKNLTFC…NAFDQKFLQN (107 aa). Pro residues predominate over residues 626 to 641; it reads EKPPTYKPPPPTPTPI. The span at 642 to 658 shows a compositional bias: low complexity; it reads PTQQQQQQSTSSTSTPT. Residues 666 to 675 are compositionally biased toward basic and acidic residues; that stretch reads DEHVKVKEDT. Over residues 676–693 the composition is skewed to polar residues; it reads NSAQPTSSSSNHTNGENA. Positions 694–733 are enriched in low complexity; it reads SSSSSSSSSKQSNNNNNNNNNNNSNSTTNSSSSSSSTTTT. The NET domain maps to 727–806; the sequence is SSSTTTTQKK…ECFKKQKQDE (80 aa).

The chain is Ankyrin repeat, bromo and BTB domain-containing protein DDB_G0293800 from Dictyostelium discoideum (Social amoeba).